The primary structure comprises 197 residues: Dephospho-CoA kinase (197 aa).

A DPCK domain is found at 2 to 197 (RIGLTGGIAS…YDALAKTAHE (196 aa)). 10 to 15 (ASGKSL) is an ATP binding site.

Belongs to the CoaE family.

The protein localises to the cytoplasm. It carries out the reaction 3'-dephospho-CoA + ATP = ADP + CoA + H(+). The protein operates within cofactor biosynthesis; coenzyme A biosynthesis; CoA from (R)-pantothenate: step 5/5. Catalyzes the phosphorylation of the 3'-hydroxyl group of dephosphocoenzyme A to form coenzyme A. This chain is Dephospho-CoA kinase, found in Shouchella clausii (strain KSM-K16) (Alkalihalobacillus clausii).